An 873-amino-acid polypeptide reads, in one-letter code: Potassium voltage-gated channel subfamily KQT member 3 (873 aa).

Residues 1-41 (MGLKARRAAGAAGGGGGEGGGGGGGAANPAGGDSAVAGDEE) form a disordered region. The Cytoplasmic segment spans residues 1–121 (MGLKARRAAG…IYDALERPRG (121 aa)). The segment covering 11 to 26 (AAGGGGGEGGGGGGGA) has biased composition (gly residues). At T82 the chain carries Phosphothreonine. The helical transmembrane segment at 122-144 (WALLYHALVFLIVLGCLILAVLT) threads the bilayer. The Extracellular segment spans residues 145–154 (TFKEYETVSG). Residues 155–176 (DWLLLLETFAIFIFGAEFALRI) form a helical membrane-spanning segment. The Cytoplasmic segment spans residues 177–194 (WAAGCCCRYKGWRGRLKF). A helical transmembrane segment spans residues 195–214 (ARKPLCMLDIFVLIASVPVV). The Extracellular segment spans residues 215 to 226 (AVGNQGNVLATS). Residues 227–245 (LRSLRFLQILRMLRMDRRG) form a helical; Voltage-sensor membrane-spanning segment. R244 lines the a 1,2-diacyl-sn-glycero-3-phospho-(1D-myo-inositol-4,5-bisphosphate) pocket. Topologically, residues 246-257 (GTWKLLGSAICA) are cytoplasmic. A helical membrane pass occupies residues 258-283 (HSKELITAWYIGFLTLILSSFLVYLV). K260 lines the a 1,2-diacyl-sn-glycero-3-phospho-(1D-myo-inositol-4,5-bisphosphate) pocket. Topologically, residues 284–303 (EKDVPEMDAQGEEMKEEFET) are extracellular. Residues 304-316 (YADALWWGLITLA) constitute an intramembrane region (pore-forming). Residues 317–322 (TIGYGD) carry the Selectivity filter motif. Over 317-327 (TIGYGDKTPKT) the chain is Extracellular. Residues 328–354 (WEGRLIAATFSLIGVSFFALPAGILGS) traverse the membrane as a helical segment. Residues 355–873 (GLALKVQEQH…SIWTPSNKPT (519 aa)) are Cytoplasmic-facing. The segment at 357–538 (ALKVQEQHRQ…RLYKKKFKET (182 aa)) is mediates interaction with calmodulin. An a 1,2-diacyl-sn-glycero-3-phospho-(1D-myo-inositol-4,5-bisphosphate)-binding site is contributed by K367. 3 disordered regions span residues 575–603 (PGPP…PRNE), 723–742 (RGGP…GSTY), and 766–873 (ELQG…NKPT). Composition is skewed to polar residues over residues 588-601 (KGSA…QSPR), 725-741 (GPSS…SGST), and 844-873 (DPFT…NKPT).

This sequence belongs to the potassium channel family. KQT (TC 1.A.1.15) subfamily. Kv7.3/KCNQ3 sub-subfamily. As to quaternary structure, heterotetramer with KCNQ2; forms heterotetrameric M-channel responsible for the native M-current. Interacts with calmodulin; the interaction is calcium-independent, constitutive and participates in the proper assembly of a functional M-channel. Heteromultimer with KCNQ5. May associate with KCNE2. Interacts with IQCJ-SCHIP1. Interacts (via the pore module) with SLC5A3/SMIT1; forms a coregulatory complex that alters ion selectivity, voltage dependence and gating kinetics of the channel. Post-translationally, KCNQ2/KCNQ3 are ubiquitinated by NEDD4L. Ubiquitination leads to protein degradation. Degradation induced by NEDD4L is inhibited by USP36. Expressed in brain and sympathetic ganglia. In brain, expressed in cortex, hippocampus and at much lower levels in cerebellum. In sympathetic ganglia, expressed at approximately equal levels in both superior cervical ganglia and prevertebral ganglia.

The protein localises to the cell membrane. The catalysed reaction is K(+)(in) = K(+)(out). It catalyses the reaction Rb(+)(in) = Rb(+)(out). It carries out the reaction Cs(+)(in) = Cs(+)(out). The enzyme catalyses Na(+)(in) = Na(+)(out). Its activity is regulated as follows. Phosphatidylinositol-4,5-bisphosphate (PIP2) potentiates the activation of KCNQ channels by enhancing the electro-mechanical coupling of the voltage-sensing domain (VSD) and the pore-forming domain (PD). In the closed state of the channel, PIP2 is anchored at the S2-S3 loop; upon channel activation, PIP2 interacts with the S4-S5 linker and is involved in channel gating. Calcium suppresses KCNQ2-KCNQ3 channel currents, with calcium-bound calmodulin inducing a change in channel configuration which leads to the reduction of channel affinity for PIP2 and subsequent current suppression. M-channel is blocked by XE991. Pore-forming subunit of the voltage-gated potassium (Kv) M-channel which is responsible for the M-current, a key controller of neuronal excitability. M-channel is composed of pore-forming subunits KCNQ2 and KCNQ3 assembled as heterotetramers, each subunit containing a voltage sensing domain (VSD) and a pore-forming domain (PD). The native M-current has a slowly activating and deactivating potassium conductance which plays a critical role in determining the subthreshold electrical excitability of neurons as well as the responsiveness to synaptic inputs. M-channel is selectively permeable in vitro to other cations besides potassium, in decreasing order of affinity K(+) &gt; Rb(+) &gt; Cs(+) &gt; Na(+). M-channel association with SLC5A3/SMIT1 alters channel ion selectivity, increasing Na(+) and Cs(+) permeation relative to K(+). Suppressed by activation of M1 muscarinic acetylcholine receptors. KCNQ3 also associates with KCNQ5 to form a functional channel in vitro and may also contribute to the M-current in brain. This chain is Potassium voltage-gated channel subfamily KQT member 3, found in Rattus norvegicus (Rat).